A 305-amino-acid chain; its full sequence is Plant-type L-asparaginase (305 aa).

Thr-175 acts as the Nucleophile in catalysis. Substrate is bound by residues 202-205 and 224-227; these read RVGD and TGLG.

It belongs to the Ntn-hydrolase family. As to quaternary structure, heterotetramer of two alpha and two beta chains arranged as a dimer of alpha/beta heterodimers. Post-translationally, autocleaved. Generates the alpha and beta subunits. The N-terminal residue of the beta subunit is thought to be responsible for the nucleophile hydrolase activity.

It catalyses the reaction L-asparagine + H2O = L-aspartate + NH4(+). In terms of biological role, catalyzes the hydrolysis of L-asparagine into L-aspartate and ammonia. The polypeptide is Plant-type L-asparaginase (Pyrococcus horikoshii (strain ATCC 700860 / DSM 12428 / JCM 9974 / NBRC 100139 / OT-3)).